An 835-amino-acid chain; its full sequence is Transcription intermediary factor 1-beta (835 aa).

Low complexity predominate over residues 1–19 (MAASAAAASAAAASAASGS). Residues 1 to 49 (MAASAAAASAAAASAASGSPGPGEGSAGGEKRSTAPSAAASASASAAAS) form a disordered region. An N-acetylalanine modification is found at Ala2. Residues Ser19 and Ser26 each carry the phosphoserine modification. Lys31 is covalently cross-linked (Glycyl lysine isopeptide (Lys-Gly) (interchain with G-Cter in SUMO2)). A compositionally biased stretch (low complexity) spans 35 to 49 (APSAAASASASAAAS). Position 50 is a phosphoserine (Ser50). Residues 65–121 (CGVCRERLRPEREPRLLPCLHSACSACLGPAAPAAANSSGDGGAAGDGTVVDCPVCK) form an RING-type zinc finger. The tract at residues 65–376 (CGVCRERLRP…LIYFQLHRAL (312 aa)) is RBCC domain. A Glycyl lysine isopeptide (Lys-Gly) (interchain with G-Cter in SUMO2) cross-link involves residue Lys127. Ser138 carries the phosphoserine modification. The B box-type 1; atypical zinc finger occupies 148-195 (DANQCCTSCEDNAPATSYCVECSEPLCETCVEAHQRVKYTKDHTVRST). Residues Cys153, Cys156, Cys177, and His181 each coordinate Zn(2+). Lys199 is covalently cross-linked (Glycyl lysine isopeptide (Lys-Gly) (interchain with G-Cter in SUMO2)). The segment at 204 to 245 (ERTVYCNVHKHEPLVLFCESCDTLTCRDCQLNAHKDHQYQFL) adopts a B box-type 2 zinc-finger fold. Residues Cys209, His212, Cys232, and His237 each coordinate Zn(2+). The interval 246–376 (EDAVRNQRKL…LIYFQLHRAL (131 aa)) is leucine zipper alpha helical coiled-coil region. Residues 247 to 376 (DAVRNQRKLL…LIYFQLHRAL (130 aa)) are interaction with MAGEC2. Residues Lys254 and Lys261 each participate in a glycyl lysine isopeptide (Lys-Gly) (interchain with G-Cter in SUMO2) cross-link. Position 266 is an N6-acetyllysine (Lys266). A Glycyl lysine isopeptide (Lys-Gly) (interchain with G-Cter in SUMO2) cross-link involves residue Lys272. Lys304 carries the post-translational modification N6-acetyllysine; alternate. Lys304 is covalently cross-linked (Glycyl lysine isopeptide (Lys-Gly) (interchain with G-Cter in SUMO2); alternate). Residue Lys319 forms a Glycyl lysine isopeptide (Lys-Gly) (interchain with G-Cter in SUMO2) linkage. Lys340 is modified (N6-acetyllysine). A Glycyl lysine isopeptide (Lys-Gly) (interchain with G-Cter in SUMO2) cross-link involves residue Lys366. Residues 366–370 (KLIYF) form an involved in binding PPP1CA region. At Lys377 the chain carries N6-acetyllysine; alternate. Lys377 is covalently cross-linked (Glycyl lysine isopeptide (Lys-Gly) (interchain with G-Cter in SUMO2); alternate). Lys377 participates in a covalent cross-link: Glycyl lysine isopeptide (Lys-Gly) (interchain with G-Cter in SUMO1); alternate. Residue Lys407 forms a Glycyl lysine isopeptide (Lys-Gly) (interchain with G-Cter in SUMO2) linkage. The interval 411–480 (ERPGTNSTGP…SRSGEGEVSG (70 aa)) is disordered. Ser417 is modified (phosphoserine). Residue Lys434 forms a Glycyl lysine isopeptide (Lys-Gly) (interchain with G-Cter in SUMO2) linkage. A compositionally biased stretch (polar residues) spans 434–443 (KQGSGSSQPM). 3 positions are modified to phosphoserine: Ser437, Ser439, and Ser453. Lys469 is covalently cross-linked (Glycyl lysine isopeptide (Lys-Gly) (interchain with G-Cter in SUMO2); alternate). A Glycyl lysine isopeptide (Lys-Gly) (interchain with G-Cter in SUMO1); alternate cross-link involves residue Lys469. Arg470 carries the citrulline modification. Ser471 carries the post-translational modification Phosphoserine. Citrulline is present on Arg472. Phosphoserine is present on residues Ser473, Ser479, and Ser489. Positions 476-513 (GEVSGLMRKVPRVSLERLDLDLTADSQPPVFKVFPGST) are HP1 box. The short motif at 481 to 494 (LMRKVPRVSLERLD) is the PxVxL motif element. Thr498 is subject to Phosphothreonine. Position 501 is a phosphoserine (Ser501). A Glycyl lysine isopeptide (Lys-Gly) (interchain with G-Cter in SUMO2) cross-link involves residue Lys507. Thr541 is subject to Phosphothreonine. Lys554 is covalently cross-linked (Glycyl lysine isopeptide (Lys-Gly) (interchain with G-Cter in SUMO2); alternate). Lys554 participates in a covalent cross-link: Glycyl lysine isopeptide (Lys-Gly) (interchain with G-Cter in SUMO); alternate. Lys575 is covalently cross-linked (Glycyl lysine isopeptide (Lys-Gly) (interchain with G-Cter in SUMO2)). The interval 584-618 (GPGAEGPRLASPSGSTSSGLEVVAPEGTSAPGGGP) is disordered. The residue at position 594 (Ser594) is a Phosphoserine. The segment at 625-672 (ATICRVCQKPGDLVMCNQCEFCFHLDCHLPALQDVPGEEWSCSLCHVL) adopts a PHD-type zinc-finger fold. Lys676 participates in a covalent cross-link: Glycyl lysine isopeptide (Lys-Gly) (interchain with G-Cter in SUMO). Residues Ser683, Ser689, and Ser697 each carry the phosphoserine modification. The 105-residue stretch at 695–799 (KLSPANQRKC…RFFETRMNEA (105 aa)) folds into the Bromo domain. Residue Lys750 forms a Glycyl lysine isopeptide (Lys-Gly) (interchain with G-Cter in SUMO2); alternate linkage. A Glycyl lysine isopeptide (Lys-Gly) (interchain with G-Cter in SUMO1); alternate cross-link involves residue Lys750. Residue Lys750 forms a Glycyl lysine isopeptide (Lys-Gly) (interchain with G-Cter in SUMO); alternate linkage. Position 752 is a phosphoserine (Ser752). At Tyr755 the chain carries Phosphotyrosine. Ser757 carries the post-translational modification Phosphoserine. Lys770, Lys774, and Lys779 each carry N6-acetyllysine; alternate. Residues Lys770, Lys774, and Lys779 each participate in a glycyl lysine isopeptide (Lys-Gly) (interchain with G-Cter in SUMO2); alternate cross-link. Residue Lys779 forms a Glycyl lysine isopeptide (Lys-Gly) (interchain with G-Cter in SUMO1); alternate linkage. Residue Ser784 is modified to Phosphoserine. Lys804 is covalently cross-linked (Glycyl lysine isopeptide (Lys-Gly) (interchain with G-Cter in SUMO2); alternate). Lys804 is covalently cross-linked (Glycyl lysine isopeptide (Lys-Gly) (interchain with G-Cter in SUMO); alternate). The tract at residues 815-835 (MSLPGAGLSSQELSGGPGDGP) is disordered. Ser824 bears the Phosphoserine; by ATM and ATR and dsDNA kinase mark.

Belongs to the TRIM/RBCC family. In terms of assembly, interacts with SETX. Oligomer; the RBCC domain homotrimerizes and interacts with one molecule of KRAB to form the KRAB-KAP1 corepressor complex. Binding to a KRAB domain is an absolute requirement for silencing gene expression. Interacts with CEBPB and NR3C1. Interacts with a number of KRAB-ZFP proteins including ZNF10, ZFP53, ZFP68, ZNF382 and ZNF256. Interacts with NCOR1, NR3C1 and CHD3. Interacts with CEBPB (via the RING-type and PHD-type zinc fingers). Component of a ternary complex that includes TRIM28, a HP1 protein (CBX1, CBX3 OR CBX5), a KRAB domain-containing protein, and DNA. Interacts with CBX5 (via the PxVxL motif); the interaction occurs in interphase nuclei and competes for binding POGZ. Interacts with POGZ; the interaction competes for interaction with CBX5. Interacts with SETDB1; the interaction is enhanced by KAP1 sumoylation, stimulates SETDB1 histone methyltransferase activity and gene silencing. Interacts (via the PHD-type zinc finger) with UBE2I; the interaction is required for sumoylation and repressor activity. Component of the TRIM28/KAP1-ERBB4-MDM2 complex involved in connecting growth factor and DNA damage responses. Interacts directly with ERBB4; the interaction represses ERBB4-mediated transcription activity. Interacts with MDM2; the interaction contributes to p53/TP53 inactivation. Component of the TRIM28/KAP1-MDM2-p53/TP53; involved in regulating p53/TP53 stabilization and activity. Interacts (via the leucine zipper alpha helical coiled-coil) with E2F1 (central region); the interaction inhibits E2F1 acetylation and transcriptional activity. Interacts with PPP1CA; the interaction dephosphorylates TRIM28 at Ser-824 and forms a complex at the p21 promoter site. Interacts with PPP1CB; the interaction is weak but is increased on dephosphorylation at Ser-824. Interacts with FES/FPS. Interacts with SMARCAD1. Interacts with, and sumoylates IRF7. Interacts with MAGEC2. Part of a complex composed of TRIM28, HDAC1, HDAC2 and EHMT2. Interacts with AICDA. Interacts (via the RBCC domain) with KOX1 (via the KRAB domain), ZNF268 (via the KRAB domain) and ZNF300 (via the KRAB domain); the interactions increase KOX1, ZNF268 and ZNF300 nuclear localization activities. The large PER complex involved in the histone methylation is composed of at least PER2, CBX3, TRIM28, SUV39H1 and/or SUV39H2; CBX3 mediates the formation of the complex. Interacts with isoform 2 of ZFP90. Forms a complex with FOXP3 in the presence of isoform 2 of ZFP90. Interacts with NR4A3; the interactions potentiates NR4A3 activity on NurRE promoter. Interacts (unphosphorylated or phosphorylated form) with ZBTB1 (via BTB domain). Probably part of a corepressor complex containing ZNF304, TRIM28, SETDB1 and DNMT1. Interacts with ATRX. Forms a complex with ATRX, SETDB1 and ZNF274. Interacts with ZFP568; the interaction mediates ZFP568 transcriptional repression activity. Interacts with RRP1B. Interacts with CRY1. Interacts with ZNF263; recruited to the SIX3 promoter along with other proteins involved in chromatin modification and transcriptional corepression where it contributes to transcriptional repression. Interacts with CYREN (via XLF motif). Interacts with TRIM17; this interaction prevents TRIM28 activity. Interacts with ZNF746. Interacts with PHF13. Interacts with ZNF354C. Interacts with ZNF432; the interaction is independent of PARP1. (Microbial infection) Interacts with herpes virus 8 protein LANA1; this interaction facilitates establishment of viral latency. In terms of processing, ATM-induced phosphorylation on Ser-824 represses sumoylation leading to the de-repression of expression of a subset of genes involved in cell cycle control and apoptosis in response to genotoxic stress. Dephosphorylation by the phosphatases, PPP1CA and PP1CB forms, allows sumoylation and expression of TRIM28 target genes. Post-translationally, sumoylation/desumoylation events regulate TRIM28-mediated transcriptional repression. Sumoylation is required for interaction with CHD3 and SETDB1 and the corepressor activity. Represses and is repressed by Ser-824 phosphorylation. Enhances the TRIM28 corepressor activity, inhibiting transcriptional activity of a number of genes including GADD45A and CDKN1A/p21. Lys-554, Lys-779 and Lys-804 are the major sites of sumoylation. In response to Dox-induced DNA damage, enhanced phosphorylation on Ser-824 prevents sumoylation and allows de-repression of CDKN1A/p21. Auto-ubiquitinated; enhanced by MAGEA2 and MAGEC2. In terms of processing, citrullinated by PADI4. Post-translationally, ADP-ribosylated by SIRT6, promoting TRIM28/KAP1 interaction with CBX5, thereby contributing to the packaging of LINE-1 retrotransposon elements into transcriptionally repressive heterochromatin. As to expression, expressed in all tissues tested including spleen, thymus, prostate, testis, ovary, small intestine, colon and peripheral blood leukocytes.

Its subcellular location is the nucleus. It carries out the reaction S-ubiquitinyl-[E2 ubiquitin-conjugating enzyme]-L-cysteine + [acceptor protein]-L-lysine = [E2 ubiquitin-conjugating enzyme]-L-cysteine + N(6)-ubiquitinyl-[acceptor protein]-L-lysine.. It functions in the pathway protein modification; protein sumoylation. Nuclear corepressor for KRAB domain-containing zinc finger proteins (KRAB-ZFPs). Mediates gene silencing by recruiting CHD3, a subunit of the nucleosome remodeling and deacetylation (NuRD) complex, and SETDB1 (which specifically methylates histone H3 at 'Lys-9' (H3K9me)) to the promoter regions of KRAB target genes. Enhances transcriptional repression by coordinating the increase in H3K9me, the decrease in histone H3 'Lys-9 and 'Lys-14' acetylation (H3K9ac and H3K14ac, respectively) and the disposition of HP1 proteins to silence gene expression. Recruitment of SETDB1 induces heterochromatinization. May play a role as a coactivator for CEBPB and NR3C1 in the transcriptional activation of ORM1. Also a corepressor for ERBB4. Inhibits E2F1 activity by stimulating E2F1-HDAC1 complex formation and inhibiting E2F1 acetylation. May serve as a partial backup to prevent E2F1-mediated apoptosis in the absence of RB1. Important regulator of CDKN1A/p21(CIP1). Has E3 SUMO-protein ligase activity toward itself via its PHD-type zinc finger. Also specifically sumoylates IRF7, thereby inhibiting its transactivation activity. Ubiquitinates p53/TP53 leading to its proteasomal degradation; the function is enhanced by MAGEC2 and MAGEA2, and possibly MAGEA3 and MAGEA6. Mediates the nuclear localization of KOX1, ZNF268 and ZNF300 transcription factors. In association with isoform 2 of ZFP90, is required for the transcriptional repressor activity of FOXP3 and the suppressive function of regulatory T-cells (Treg). Probably forms a corepressor complex required for activated KRAS-mediated promoter hypermethylation and transcriptional silencing of tumor suppressor genes (TSGs) or other tumor-related genes in colorectal cancer (CRC) cells. Required to maintain a transcriptionally repressive state of genes in undifferentiated embryonic stem cells (ESCs). In ESCs, in collaboration with SETDB1, is also required for H3K9me3 and silencing of endogenous and introduced retroviruses in a DNA-methylation independent-pathway. Associates at promoter regions of tumor suppressor genes (TSGs) leading to their gene silencing. The SETDB1-TRIM28-ZNF274 complex may play a role in recruiting ATRX to the 3'-exons of zinc-finger coding genes with atypical chromatin signatures to establish or maintain/protect H3K9me3 at these transcriptionally active regions. Functionally, (Microbial infection) Plays a critical role in the shutdown of lytic gene expression during the early stage of herpes virus 8 primary infection. This inhibition is mediated through interaction with herpes virus 8 protein LANA1. The chain is Transcription intermediary factor 1-beta from Homo sapiens (Human).